Here is a 409-residue protein sequence, read N- to C-terminus: uncharacterized protein (409 aa).

Residues 3-162 (TDVRVLRQDD…DDVRLRYAVP (160 aa)) enclose the N-acetyltransferase domain. Acetyl-CoA contacts are provided by residues 82–84 (VSV), 90–95 (RRGVLT), and 118–119 (SE). Tyr123 functions as the Proton donor in the catalytic mechanism. Catalysis depends on Phe409, which acts as the Proton acceptor; via carboxylate.

Belongs to the acetyltransferase Eis family. As to quaternary structure, homohexamer; trimer of dimers.

This is an uncharacterized protein from Streptomyces avermitilis (strain ATCC 31267 / DSM 46492 / JCM 5070 / NBRC 14893 / NCIMB 12804 / NRRL 8165 / MA-4680).